The following is a 353-amino-acid chain: 3'-5' exonuclease (353 aa).

The interval Met1 to Lys119 is disordered. Composition is skewed to basic and acidic residues over residues Lys13–Lys30 and Lys37–Ala50. Residues Thr59–Arg70 show a composition bias toward basic residues. Residues Lys71–Pro90 show a composition bias toward basic and acidic residues. A phosphoserine mark is found at Ser103, Ser109, and Ser111. One can recognise a 3'-5' exonuclease domain in the interval Val145–Arg313. 3 residues coordinate Mg(2+): Asp162, Glu164, and Asp300.

The protein belongs to the WRNexo family.

It is found in the nucleus. Functionally, has exonuclease activity on both single-stranded and duplex templates bearing overhangs, but not blunt ended duplex DNA, and cleaves in a 3'-5' direction. Essential for the formation of DNA replication focal centers. Has an important role in maintaining genome stability. The polypeptide is 3'-5' exonuclease (Drosophila melanogaster (Fruit fly)).